The primary structure comprises 267 residues: Dichloromethane dehalogenase (267 aa).

The region spanning 3–85 (TKLRYLHHPA…YLSEKYDCSS (83 aa)) is the GST N-terminal domain. Positions 91–224 (TLEERGHIQQ…AWQYENVRKY (134 aa)) constitute a GST C-terminal domain.

This sequence belongs to the GST superfamily. Homohexamer.

It is found in the cytoplasm. It carries out the reaction dichloromethane + H2O = formaldehyde + 2 chloride + 2 H(+). Its pathway is xenobiotic degradation; dichloromethane degradation. The chain is Dichloromethane dehalogenase (dcmA) from Methylophilus leisingeri (strain DSM 6813 / VKM B-2013 / DM11).